A 398-amino-acid chain; its full sequence is Leucine carboxyl methyltransferase 1 (398 aa).

Polar residues predominate over residues 1–11; sequence MSASQIPNLNT. Positions 1–54 are disordered; it reads MSASQIPNLNTLRRGGGRGRLRGRGGFETGAPSEDRHGSRGLAAQDRVVQGTDN. Residues arginine 97, glycine 123, aspartate 151, and 201 to 202 contribute to the S-adenosyl-L-methionine site; that span reads DL. Positions 208–218 are enriched in low complexity; it reads SGSATTSRSPS. A disordered region spans residues 208–232; it reads SGSATTSRSPSSPNPAEKDQPPCPL. Glutamate 246 is an S-adenosyl-L-methionine binding site.

The protein belongs to the methyltransferase superfamily. LCMT family.

The catalysed reaction is [phosphatase 2A protein]-C-terminal L-leucine + S-adenosyl-L-methionine = [phosphatase 2A protein]-C-terminal L-leucine methyl ester + S-adenosyl-L-homocysteine. Functionally, methylates the carboxyl group of the C-terminal leucine residue of protein phosphatase 2A catalytic subunits to form alpha-leucine ester residues. The polypeptide is Leucine carboxyl methyltransferase 1 (ppm1) (Aspergillus fumigatus (strain ATCC MYA-4609 / CBS 101355 / FGSC A1100 / Af293) (Neosartorya fumigata)).